The sequence spans 119 residues: gSG7 salivary protein (119 aa).

Disulfide bonds link Cys58-Cys113 and Cys81-Cys91.

It is found in the secreted. With respect to regulation, the activity is increased in the presence of host properdin (CFP). In terms of biological role, salivary protein that inhibits the alternative pathway of complement system activation in the host while having no inhibitory effect on the classical pathway. Inhibits activity of activated host C3-convertase complex C3bBb (C3-CFB). Enhances accumulation of C3bBb on immobilized properdin. This is gSG7 salivary protein from Anopheles freeborni (Western malaria mosquito).